Consider the following 850-residue polypeptide: Trimethylguanosine synthase (850 aa).

Residues 54 to 85 (NNAGDRVTEEEEDDHSSGTTESHSADEGDLDP) are disordered. Residue Thr-61 is modified to Phosphothreonine. Phosphoserine is present on residues Ser-92 and Ser-152. Disordered regions lie at residues 278–311 (DQNA…DNDH), 327–454 (EVEQ…GGIP), and 523–566 (ISQE…PENC). A compositionally biased stretch (basic and acidic residues) spans 363-374 (TPKESDISENRS). The segment covering 375-390 (SDQPAQELQESSGTNT) has biased composition (polar residues). Phosphoserine is present on residues Ser-405 and Ser-431. Residues 424-435 (DIDENPDSEVDD) show a composition bias toward acidic residues. A compositionally biased stretch (basic and acidic residues) spans 548–562 (SMEKTDGLMETRDPE). Position 571 is a phosphoserine (Ser-571). A disordered region spans residues 595–628 (TEGVANSPRAEAEVEIKKKKKKKKKNKNKKINGL). Residues 611–624 (KKKKKKKKKNKNKK) are compositionally biased toward basic residues. Residue Asp-713 coordinates S-adenosyl-L-methionine.

This sequence belongs to the methyltransferase superfamily. Trimethylguanosine synthase family. In terms of assembly, may form homooligomers. Interacts with CREBBP/CBP, EED/WAIT1, EP300/P300, NCOA6/PRIP, PPARBP/PBP and SMN. As to expression, a 55 kDa isoform is widely expressed while a 90 kDa isoform is detected exclusively in brain and testis (at protein level).

It is found in the cytoplasm. The protein localises to the nucleus. It localises to the cajal body. Its subcellular location is the nucleolus. It catalyses the reaction a 5'-end (N(7)-methyl 5'-triphosphoguanosine)-ribonucleoside in snRNA + S-adenosyl-L-methionine = a 5'-end (N(2),N(7)-dimethyl 5'-triphosphoguanosine)-ribonucleoside in snRNA + S-adenosyl-L-homocysteine + H(+). The enzyme catalyses a 5'-end (N(7)-methyl 5'-triphosphoguanosine)-ribonucleoside in snoRNA + S-adenosyl-L-methionine = a 5'-end (N(2),N(7)-dimethyl 5'-triphosphoguanosine)-ribonucleoside in snoRNA + S-adenosyl-L-homocysteine + H(+). It carries out the reaction a 5'-end (N(2),N(7)-dimethyl 5'-triphosphoguanosine)-ribonucleoside in snRNA + S-adenosyl-L-methionine = a 5'-end (N(2),N(2),N(7)-trimethyl 5'-triphosphoguanosine)-ribonucleoside in snRNA + S-adenosyl-L-homocysteine + H(+). The catalysed reaction is a 5'-end (N(2),N(7)-dimethyl 5'-triphosphoguanosine)-ribonucleoside in snoRNA + S-adenosyl-L-methionine = a 5'-end (N(2),N(2),N(7)-trimethyl 5'-triphosphoguanosine)-ribonucleoside in snoRNA + S-adenosyl-L-homocysteine + H(+). Functionally, catalyzes the 2 serial methylation steps for the conversion of the 7-monomethylguanosine (m(7)G) caps of snRNAs and snoRNAs to a 2,2,7-trimethylguanosine (m(2,2,7)G) cap structure. The enzyme is specific for guanine, and N7 methylation must precede N2 methylation. Hypermethylation of the m7G cap of U snRNAs leads to their concentration in nuclear foci, their colocalization with coilin and the formation of canonical Cajal bodies (CBs). Plays a role in transcriptional regulation. The protein is Trimethylguanosine synthase of Rattus norvegicus (Rat).